Here is a 641-residue protein sequence, read N- to C-terminus: Macrolide export ATP-binding/permease protein MacB (641 aa).

Residues 2–240 (IKLENIKKSF…LKQNLKEIKP (239 aa)) form the ABC transporter domain. 38–45 (GQSGSGKS) is an ATP binding site. The next 4 helical transmembrane spans lie at 268 to 288 (FLTM…VALA), 516 to 536 (LLIS…VMNI), 565 to 585 (FLIE…GLAY), and 601 to 621 (IFST…GIVF).

This sequence belongs to the ABC transporter superfamily. Macrolide exporter (TC 3.A.1.122) family. In terms of assembly, homodimer.

It localises to the cell inner membrane. Non-canonical ABC transporter that contains transmembrane domains (TMD), which form a pore in the inner membrane, and an ATP-binding domain (NBD), which is responsible for energy generation. Confers resistance against macrolides. This is Macrolide export ATP-binding/permease protein MacB from Campylobacter fetus subsp. fetus (strain 82-40).